The following is a 505-amino-acid chain: Cobyric acid synthase (505 aa).

In terms of domain architecture, GATase cobBQ-type spans 260 to 453; it reads RIAVAAIYFP…FHGIIDEPEV (194 aa). Residue cysteine 341 is the Nucleophile of the active site. Residue histidine 445 is part of the active site.

The protein belongs to the CobB/CobQ family. CobQ subfamily.

It functions in the pathway cofactor biosynthesis; adenosylcobalamin biosynthesis. Catalyzes amidations at positions B, D, E, and G on adenosylcobyrinic A,C-diamide. NH(2) groups are provided by glutamine, and one molecule of ATP is hydrogenolyzed for each amidation. This is Cobyric acid synthase from Chlorobium phaeobacteroides (strain DSM 266 / SMG 266 / 2430).